The sequence spans 87 residues: UPF0250 protein BCc_307 (87 aa).

It belongs to the UPF0250 family.

The protein is UPF0250 protein BCc_307 of Buchnera aphidicola subsp. Cinara cedri (strain Cc).